A 207-amino-acid chain; its full sequence is Small ribosomal subunit protein uS4 (207 aa).

Residues 31–55 are disordered; it reads KCKLDSKPGQHGRTSGARTSDYGTQ. Polar residues predominate over residues 42–53; that stretch reads GRTSGARTSDYG. The S4 RNA-binding domain occupies 97-160; sequence SRLDNVVYRM…KKQARILEAL (64 aa).

The protein belongs to the universal ribosomal protein uS4 family. As to quaternary structure, part of the 30S ribosomal subunit. Contacts protein S5. The interaction surface between S4 and S5 is involved in control of translational fidelity.

In terms of biological role, one of the primary rRNA binding proteins, it binds directly to 16S rRNA where it nucleates assembly of the body of the 30S subunit. Its function is as follows. With S5 and S12 plays an important role in translational accuracy. The sequence is that of Small ribosomal subunit protein uS4 from Paraburkholderia phymatum (strain DSM 17167 / CIP 108236 / LMG 21445 / STM815) (Burkholderia phymatum).